A 371-amino-acid chain; its full sequence is Anhydro-N-acetylmuramic acid kinase (371 aa).

12-20 (GTVLDGNID) provides a ligand contact to ATP.

This sequence belongs to the anhydro-N-acetylmuramic acid kinase family.

The enzyme catalyses 1,6-anhydro-N-acetyl-beta-muramate + ATP + H2O = N-acetyl-D-muramate 6-phosphate + ADP + H(+). The protein operates within amino-sugar metabolism; 1,6-anhydro-N-acetylmuramate degradation. Its pathway is cell wall biogenesis; peptidoglycan recycling. In terms of biological role, catalyzes the specific phosphorylation of 1,6-anhydro-N-acetylmuramic acid (anhMurNAc) with the simultaneous cleavage of the 1,6-anhydro ring, generating MurNAc-6-P. Is required for the utilization of anhMurNAc either imported from the medium or derived from its own cell wall murein, and thus plays a role in cell wall recycling. The chain is Anhydro-N-acetylmuramic acid kinase from Mesorhizobium japonicum (strain LMG 29417 / CECT 9101 / MAFF 303099) (Mesorhizobium loti (strain MAFF 303099)).